The sequence spans 311 residues: Small ribosomal subunit biogenesis GTPase RsgA (311 aa).

Residues 77–239 enclose the CP-type G domain; it reads LSKQSHIIAT…IIDTPGIKGF (163 aa). Residues 126 to 129 and 180 to 188 each bind GTP; these read NKTD and GHSGVGKST. Zn(2+) is bound by residues C263, C268, H270, and C276.

Belongs to the TRAFAC class YlqF/YawG GTPase family. RsgA subfamily. Monomer. Associates with 30S ribosomal subunit, binds 16S rRNA. It depends on Zn(2+) as a cofactor.

The protein localises to the cytoplasm. Functionally, one of several proteins that assist in the late maturation steps of the functional core of the 30S ribosomal subunit. Helps release RbfA from mature subunits. May play a role in the assembly of ribosomal proteins into the subunit. Circularly permuted GTPase that catalyzes slow GTP hydrolysis, GTPase activity is stimulated by the 30S ribosomal subunit. This is Small ribosomal subunit biogenesis GTPase RsgA from Azobacteroides pseudotrichonymphae genomovar. CFP2.